Consider the following 299-residue polypeptide: Recombination-associated protein RdgC (299 aa).

Belongs to the RdgC family.

It localises to the cytoplasm. The protein resides in the nucleoid. In terms of biological role, may be involved in recombination. The protein is Recombination-associated protein RdgC of Bordetella bronchiseptica (strain ATCC BAA-588 / NCTC 13252 / RB50) (Alcaligenes bronchisepticus).